A 345-amino-acid polypeptide reads, in one-letter code: MTVNLRDLSRTIAEFAFLTALVCNSLLIYLTARRTKNITGAYKYMIILFALLGLIFSCTEMLARPFVHNFNASFVYFSLSNDLSEFKSLVQMLLVLYSGLYSSLISFVAVQFIYRYMVLVNANLLESWFTGWKLVFWVFYVIFFGFAWSASVYFCLFPDTYSYNYIRTEFKDVYNIGVDRVAIFILVAYEKHPSSEEYKLRPASVIMIAGTISILVIQYSIMLFCGASMHRQMNEKLKNFSPDNQRLQKQFFKTLLLQISVPTVLFHMPIFPVLLGPFFNFEISAESGIIYSLFSLYPPIDGLIIMTVVTDYRIALTELFLGSHSGAQVEVIPVEVVSILNFSLL.

Residues 1-11 (MTVNLRDLSRT) are Extracellular-facing. The chain crosses the membrane as a helical span at residues 12–32 (IAEFAFLTALVCNSLLIYLTA). The Cytoplasmic segment spans residues 33 to 37 (RRTKN). Residues 38–58 (ITGAYKYMIILFALLGLIFSC) form a helical membrane-spanning segment. Residues 59-92 (TEMLARPFVHNFNASFVYFSLSNDLSEFKSLVQM) are Extracellular-facing. An N-linked (GlcNAc...) asparagine glycan is attached at asparagine 71. A helical transmembrane segment spans residues 93 to 113 (LLVLYSGLYSSLISFVAVQFI). Topologically, residues 114 to 133 (YRYMVLVNANLLESWFTGWK) are cytoplasmic. The chain crosses the membrane as a helical span at residues 134-154 (LVFWVFYVIFFGFAWSASVYF). Residues 155–204 (CLFPDTYSYNYIRTEFKDVYNIGVDRVAIFILVAYEKHPSSEEYKLRPAS) are Extracellular-facing. The chain crosses the membrane as a helical span at residues 205–225 (VIMIAGTISILVIQYSIMLFC). Residues 226 to 258 (GASMHRQMNEKLKNFSPDNQRLQKQFFKTLLLQ) lie on the Cytoplasmic side of the membrane. A helical transmembrane segment spans residues 259 to 279 (ISVPTVLFHMPIFPVLLGPFF). At 280–288 (NFEISAESG) the chain is on the extracellular side. Residues 289–309 (IIYSLFSLYPPIDGLIIMTVV) traverse the membrane as a helical segment. Over 310 to 345 (TDYRIALTELFLGSHSGAQVEVIPVEVVSILNFSLL) the chain is Cytoplasmic.

This sequence belongs to the nematode receptor-like protein str family. Detected in ALM and PLM mechanosensory neurons and head neurons.

The protein resides in the cell membrane. Functionally, regulates egg-laying and locomotion. Likely to act upstream of goa-1 to suppress 5-hydroxytryptamine (5-HT) biosynthesis in hermaphrodite-specific neurons (HSNs) through inhibition of tph-1 transcription. This Caenorhabditis elegans protein is G-protein coupled receptor str-33.